The primary structure comprises 163 residues: MIVVQKQLINSQIKSPQVFLIDHENNNRGLIDTYEALQLAQSVELDLVVVSQSKDTPVAKILNYGKLQYQKKKRQGQSARPTVKEVRFRPNVGAADYNLRIEQALQWLSKGDSVKFAIRLRGRENQYREQAGQMLERIVTDLSQVGKVQSLDKRSLIVQIMPA.

The protein belongs to the IF-3 family.

The polypeptide is Translation initiation factor IF-3-like (Nostoc sp. (strain PCC 7120 / SAG 25.82 / UTEX 2576)).